The chain runs to 1450 residues: DNA-directed RNA polymerase RPB1 homolog (1450 aa).

Belongs to the RNA polymerase beta' chain family. In terms of assembly, part of the viral DNA-directed RNA polymerase that consists of 8 polII-like subunits (RPB1, RPB2, RPB3, RPB5, RPB6, RPB7, RPB9, RPB10), a capping enzyme and a termination factor.

Its subcellular location is the virion. It carries out the reaction RNA(n) + a ribonucleoside 5'-triphosphate = RNA(n+1) + diphosphate. Functionally, catalytic component of the DNA-directed RNA polymerase (RNAP) that catalyzes the transcription in the cytoplasm of viral DNA into RNA using the four ribonucleoside triphosphates as substrates. Forms the polymerase active center together with RPB2. Part of the core element with the central large cleft, the clamp element that moves to open and close the cleft and the jaws that are thought to grab the incoming DNA template. The sequence is that of DNA-directed RNA polymerase RPB1 homolog from African swine fever virus (isolate Tick/South Africa/Pretoriuskop Pr4/1996) (ASFV).